A 458-amino-acid chain; its full sequence is MRRISVKKLCSFCLCACAFAFLVMTFQVIELLGQFEQTEHRQQIKRFEDIKVQANAHVSDVQYPVIVWWSPLTGELGRLGECGHNRCFFTVNKSYYSHPQTKAFLFYGTDFSIESLPLPRHKQHQWALFHEESPKNNYKLFHKPLITQFNHTATFSRHSHLPLTTQHLEDINTLTAQTHLLPLSYKNHLRQTLAPVVYVQSDCDPPSDRDTYIRELMQHIQVDSYGQCLHNKDLPPHLRDSTAMDDQDFYKILAQYKFILAFENAVCDDYITEKLWRPLKLGVVPVYYGAPNIHMWLPDNQSAIVVNPNEPPKKLAQYLKRLDKNDWEYLKYLEWKHKREITNINLLKELKERPWGVQDITQDNFIDVFECMVCSRVWENIHRQEEKLPPKVWRAEESHLTCPPPKLFDFALSSSSSLRQMWGASYEQSKREARALAQMLHTNTNFTITQFWREVFTD.

At 1-11 (MRRISVKKLCS) the chain is on the cytoplasmic side. Residues 12–32 (FCLCACAFAFLVMTFQVIELL) traverse the membrane as a helical; Signal-anchor for type II membrane protein segment. The Lumenal segment spans residues 33 to 458 (GQFEQTEHRQ…TQFWREVFTD (426 aa)). Residues Asn-92, Asn-150, and Asn-300 are each glycosylated (N-linked (GlcNAc...) asparagine). A disulfide bridge connects residues Cys-371 and Cys-374. Asn-445 is a glycosylation site (N-linked (GlcNAc...) asparagine).

Belongs to the glycosyltransferase 10 family.

The protein resides in the endoplasmic reticulum membrane. It carries out the reaction L-threonyl-[protein] + GDP-beta-L-fucose = 3-O-(alpha-L-fucosyl)-L-threonyl-[protein] + GDP + H(+). The catalysed reaction is L-seryl-[protein] + GDP-beta-L-fucose = 3-O-(alpha-L-fucosyl)-L-seryl-[protein] + GDP + H(+). It functions in the pathway protein modification; protein glycosylation. In terms of biological role, protein O-fucosyltransferase that specifically catalyzes O-fucosylation of serine or threonine residues in EMI domains of target proteins. Attaches fucose through an O-glycosidic linkage. O-fucosylation of EMI domain-containing proteins may be required for facilitating protein folding and secretion. The chain is GDP-fucose protein O-fucosyltransferase 3 (fut10) from Danio rerio (Zebrafish).